Here is a 100-residue protein sequence, read N- to C-terminus: Urease subunit gamma (100 aa).

Belongs to the urease gamma subunit family. Heterotrimer of UreA (gamma), UreB (beta) and UreC (alpha) subunits. Three heterotrimers associate to form the active enzyme.

The protein localises to the cytoplasm. The catalysed reaction is urea + 2 H2O + H(+) = hydrogencarbonate + 2 NH4(+). Its pathway is nitrogen metabolism; urea degradation; CO(2) and NH(3) from urea (urease route): step 1/1. This is Urease subunit gamma from Prochlorococcus marinus (strain AS9601).